Here is a 53-residue protein sequence, read N- to C-terminus: UPF0391 membrane protein gsr2640 (53 aa).

2 helical membrane-spanning segments follow: residues 4–24 and 32–49; these read LLWL…GGVV and WFLI…FVTG.

Belongs to the UPF0391 family.

It is found in the cell membrane. The protein is UPF0391 membrane protein gsr2640 of Gloeobacter violaceus (strain ATCC 29082 / PCC 7421).